The sequence spans 156 residues: Cyclic pyranopterin monophosphate synthase (156 aa).

Substrate is bound by residues 75–77 (LCH) and 111–112 (ME). Residue D126 is part of the active site.

This sequence belongs to the MoaC family. Homohexamer; trimer of dimers.

It carries out the reaction (8S)-3',8-cyclo-7,8-dihydroguanosine 5'-triphosphate = cyclic pyranopterin phosphate + diphosphate. Its pathway is cofactor biosynthesis; molybdopterin biosynthesis. In terms of biological role, catalyzes the conversion of (8S)-3',8-cyclo-7,8-dihydroguanosine 5'-triphosphate to cyclic pyranopterin monophosphate (cPMP). In Erythrobacter litoralis (strain HTCC2594), this protein is Cyclic pyranopterin monophosphate synthase.